The sequence spans 702 residues: Putative endo-beta-N-acetylglucosaminidase (702 aa).

Positions 1 to 23 are cleaved as a signal peptide; sequence MKKVRFIFLALLFFLASPEGAMA. 15 Cell wall-binding repeats span residues 42 to 63, 65 to 84, 86 to 105, 124 to 145, 147 to 166, 185 to 206, 208 to 227, 229 to 248, 250 to 271, 273 to 292, 294 to 315, 317 to 336, 338 to 359, 361 to 380, and 382 to 403; these read ANEWVFDTHYQSWFYIKADANY, ENEWLKQGDDYFYLKSGGYM, KSEWVEDKGAFYYLDQDGKM, IEDWVYDSQYDAWFYIKADGQH, EKEWLQIKGKDYYFKSGGYL, QQGWLFDKQYQSWFYIKENGNY, DKEWIFENGHYYYLKSGGYM, ANEWIWDKESWFYLKFDGKI, EKEWVYDSHSQAWYYFKSGGYM, ANEWIWDKESWFYLKFDGKM, ANEWIWDKESWFYLKSDGKI, and ANEWIWDKESWFYLKSDGKM.

It belongs to the glycosyl hydrolase 73 family.

It localises to the secreted. It catalyses the reaction an N(4)-(oligosaccharide-(1-&gt;3)-[oligosaccharide-(1-&gt;6)]-beta-D-Man-(1-&gt;4)-beta-D-GlcNAc-(1-&gt;4)-alpha-D-GlcNAc)-L-asparaginyl-[protein] + H2O = an oligosaccharide-(1-&gt;3)-[oligosaccharide-(1-&gt;6)]-beta-D-Man-(1-&gt;4)-D-GlcNAc + N(4)-(N-acetyl-beta-D-glucosaminyl)-L-asparaginyl-[protein]. Its function is as follows. Plays an important role in cell wall degradation and cell separation. In Streptococcus pneumoniae (strain ATCC BAA-255 / R6), this protein is Putative endo-beta-N-acetylglucosaminidase (lytB).